We begin with the raw amino-acid sequence, 763 residues long: Fibroblast growth factor receptor (763 aa).

Positions 1-27 are cleaved as a signal peptide; that stretch reads MKEFEVKVASTAFVLVLFSLTINQILA. The Extracellular segment spans residues 28–291; the sequence is SETSTKFRSP…ITKGIPNETN (264 aa). Residues 34-74 form a disordered region; the sequence is FRSPVPAPTVPDWNHLPNEGNEENVVSAPKQDGASGGQKPY. 2 consecutive Ig-like C2-type domains span residues 73–164 and 173–270; these read PYWT…YQLD and PILA…AWLS. Cysteine 98 and cysteine 148 form a disulfide bridge. 6 N-linked (GlcNAc...) asparagine glycosylation sites follow: asparagine 158, asparagine 182, asparagine 220, asparagine 230, asparagine 243, and asparagine 288. Cysteine 195 and cysteine 254 are oxidised to a cystine. The chain crosses the membrane as a helical span at residues 292-312; that stretch reads IIIYVMCGVLVILFGLAVVLV. The Cytoplasmic segment spans residues 313 to 763; that stretch reads LYYHCYNGKD…NEHARLRSEA (451 aa). The 291-residue stretch at 382-672 folds into the Protein kinase domain; that stretch reads ITLVERLDEG…TLVEDLDRML (291 aa). ATP is bound by residues 388–396 and lysine 417; that span reads LDEGFFGQV. The Proton acceptor role is filled by aspartate 537. Residue tyrosine 568 is modified to Phosphotyrosine; by autocatalysis. Residues 691-711 show a composition bias toward acidic residues; the sequence is YSESSEDESESQNSDEEDDDS. The tract at residues 691-742 is disordered; the sequence is YSESSEDESESQNSDEEDDDSVFERMRQIDSLSNGNIPFNEEDSSNSDPYVA.

The protein belongs to the protein kinase superfamily. Tyr protein kinase family. Fibroblast growth factor receptor subfamily.

It is found in the membrane. The enzyme catalyses L-tyrosyl-[protein] + ATP = O-phospho-L-tyrosyl-[protein] + ADP + H(+). Its function is as follows. Receptor for basic fibroblast growth factor. The chain is Fibroblast growth factor receptor (FGFR) from Halocynthia roretzi (Sea squirt).